Here is a 388-residue protein sequence, read N- to C-terminus: S-adenosylmethionine synthase (388 aa).

Histidine 17 is an ATP binding site. Aspartate 19 lines the Mg(2+) pocket. Glutamate 45 is a binding site for K(+). The L-methionine site is built by glutamate 58 and glutamine 102. Positions 102-112 (QSVHIAQGVDA) are flexible loop. ATP is bound by residues 167 to 169 (DAK), aspartate 241, 247 to 248 (RK), alanine 264, and lysine 268. An L-methionine-binding site is contributed by aspartate 241. An L-methionine-binding site is contributed by lysine 272.

It belongs to the AdoMet synthase family. In terms of assembly, homotetramer; dimer of dimers. The cofactor is Mg(2+). K(+) serves as cofactor.

It localises to the cytoplasm. The enzyme catalyses L-methionine + ATP + H2O = S-adenosyl-L-methionine + phosphate + diphosphate. It participates in amino-acid biosynthesis; S-adenosyl-L-methionine biosynthesis; S-adenosyl-L-methionine from L-methionine: step 1/1. Functionally, catalyzes the formation of S-adenosylmethionine (AdoMet) from methionine and ATP. The overall synthetic reaction is composed of two sequential steps, AdoMet formation and the subsequent tripolyphosphate hydrolysis which occurs prior to release of AdoMet from the enzyme. This chain is S-adenosylmethionine synthase, found in Maricaulis maris (strain MCS10) (Caulobacter maris).